Here is a 330-residue protein sequence, read N- to C-terminus: MSDLAIPTISCTESDGKYGRFVVEPLEKGFGTTMGNSLRRILLSYLDGVAITRVRIDGIQHEFSALPKAKEDTLDFLLNLKNIRVESLSGLEGILYLKASGAKVVTAADIEPSNDFEVVNPELYLLTLDSDDAVLNVELEVELGRGYRAPESTENTPIGTIPVDAIFTPIRKVNFTTEPMHVGRETSLERLVLEVWTDGTIEPATAVSRSADILVKQFAALVSHNKVVAEVEASEPVKYAIPEEKYNMPIEQLDLSVRAVNCLRHAGITTVGEVINRGTKELLTLRNFGLKSLTELEDRLKTIGLSLNPEEELFEDAENSKKKNKGMDEA.

Positions 1 to 225 (MSDLAIPTIS…KQFAALVSHN (225 aa)) are alpha N-terminal domain (alpha-NTD). Residues 237-330 (VKYAIPEEKY…KKKNKGMDEA (94 aa)) form an alpha C-terminal domain (alpha-CTD) region.

It belongs to the RNA polymerase alpha chain family. In terms of assembly, homodimer. The RNAP catalytic core consists of 2 alpha, 1 beta, 1 beta' and 1 omega subunit. When a sigma factor is associated with the core the holoenzyme is formed, which can initiate transcription.

The catalysed reaction is RNA(n) + a ribonucleoside 5'-triphosphate = RNA(n+1) + diphosphate. Functionally, DNA-dependent RNA polymerase catalyzes the transcription of DNA into RNA using the four ribonucleoside triphosphates as substrates. The chain is DNA-directed RNA polymerase subunit alpha from Dehalococcoides mccartyi (strain ATCC BAA-2266 / KCTC 15142 / 195) (Dehalococcoides ethenogenes (strain 195)).